The sequence spans 227 residues: UPF0173 metal-dependent hydrolase BC_4613 (227 aa).

The protein belongs to the UPF0173 family.

In Bacillus cereus (strain ATCC 14579 / DSM 31 / CCUG 7414 / JCM 2152 / NBRC 15305 / NCIMB 9373 / NCTC 2599 / NRRL B-3711), this protein is UPF0173 metal-dependent hydrolase BC_4613.